The following is a 355-amino-acid chain: Countin-like protein (355 aa).

A signal peptide spans 1 to 27 (MNKSLFSLILLIITIFNLASNINIVSA). The interval 63–83 (NNHEDNNNNNNNNNNNNNAYN) is disordered. Residues 69-83 (NNNNNNNNNNNNAYN) are compositionally biased toward low complexity. The Saposin B-type domain occupies 93 to 177 (GDIECVVCLD…ELITACSTPK (85 aa)). Disulfide bonds link Cys97/Cys173, Cys100/Cys167, and Cys128/Cys140. N-linked (GlcNAc...) asparagine glycans are attached at residues Asn132, Asn209, Asn242, Asn253, Asn254, Asn282, and Asn303. The segment at 290-355 (ISNPTPTPTP…SSHYKNKINK (66 aa)) is disordered. The segment covering 301-342 (PSNSTTPTPTPTNSTPTPTSTSTPTSTPTSTPTPTPTSSSST) has biased composition (low complexity). Over residues 345–355 (HSSHYKNKINK) the composition is skewed to basic residues.

It belongs to the countin family.

It localises to the secreted. The sequence is that of Countin-like protein from Dictyostelium discoideum (Social amoeba).